The sequence spans 379 residues: Alpha-humulene synthase eupE (379 aa).

The protein belongs to the terpene synthase family. Alpha-humulene synthase eupE subfamily. Requires Mg(2+) as cofactor.

It catalyses the reaction (2E,6E)-farnesyl diphosphate = alpha-humulene + diphosphate. The protein operates within secondary metabolite biosynthesis; terpenoid biosynthesis. Alpha-humulene synthase; part of the gene cluster that mediates the biosynthesis of eupenifeldin, a bistropolone meroterpenoid that acts as an antitumor agent. The first step of eupenifeldin biosynthesis is the biosynthesis of 3-methylorcinaldehyde performed by the non-reducing polyketide synthase eupA. Oxidative dearomatization of 3-methylorcinaldehyde likely catalyzed by the FAD-dependent monooxygenase eupB is followed by oxidative ring expansion by the 2-oxoglutarate-dependent dioxygenase eupC to provide the first tropolone metabolite, tropolone stipitaldehyde. In parallel, generation of sesquiterpene alpha-humulene from farnesylpyrophosphate (FPP) is catalyzed by the terpene cyclase eupE. The cytochrome P450 monooxygenase eupD then hydroxylates humulene to humulenol. The putative Diels-Alderase eupF probably catalyzes the formation of the tropolone-humulene skeleton by linking humulenol and the polyketide moiety. The short-chain dehydrogenase/reductase eupG and the flavin-dependent monooxygenase eupH are also essential for eupenifeldin biosynthesis and are likely the additional decorating enzymes of the tropolone-humulene skeleton to produce final eupenifeldin or derivatives. The sequence is that of Alpha-humulene synthase eupE from Phoma sp.